Reading from the N-terminus, the 77-residue chain is Acyl carrier protein (77 aa).

Positions 2 to 77 (STVEERVKKI…DAIDYILANQ (76 aa)) constitute a Carrier domain. Ser-37 carries the O-(pantetheine 4'-phosphoryl)serine modification.

This sequence belongs to the acyl carrier protein (ACP) family. In terms of processing, 4'-phosphopantetheine is transferred from CoA to a specific serine of apo-ACP by AcpS. This modification is essential for activity because fatty acids are bound in thioester linkage to the sulfhydryl of the prosthetic group.

It localises to the cytoplasm. It participates in lipid metabolism; fatty acid biosynthesis. Its function is as follows. Carrier of the growing fatty acid chain in fatty acid biosynthesis. The chain is Acyl carrier protein from Hahella chejuensis (strain KCTC 2396).